The primary structure comprises 201 residues: Glycerol-3-phosphate acyltransferase (201 aa).

The next 5 membrane-spanning stretches (helical) occupy residues 10 to 30, 59 to 79, 87 to 107, 116 to 136, and 161 to 181; these read ALIL…GIVI, PAAL…VLIA, AAQL…WLGF, FLGT…LTWL, and ILLG…LIFI.

This sequence belongs to the PlsY family. As to quaternary structure, probably interacts with PlsX.

It localises to the cell inner membrane. It catalyses the reaction an acyl phosphate + sn-glycerol 3-phosphate = a 1-acyl-sn-glycero-3-phosphate + phosphate. Its pathway is lipid metabolism; phospholipid metabolism. Its function is as follows. Catalyzes the transfer of an acyl group from acyl-phosphate (acyl-PO(4)) to glycerol-3-phosphate (G3P) to form lysophosphatidic acid (LPA). This enzyme utilizes acyl-phosphate as fatty acyl donor, but not acyl-CoA or acyl-ACP. The sequence is that of Glycerol-3-phosphate acyltransferase from Cereibacter sphaeroides (strain ATCC 17029 / ATH 2.4.9) (Rhodobacter sphaeroides).